A 254-amino-acid chain; its full sequence is uncharacterized protein (254 aa).

Belongs to the nucleoside-specific channel-forming outer membrane porin (Tsx) (TC 1.B.10) family.

This is an uncharacterized protein from Escherichia coli (strain K12).